Consider the following 279-residue polypeptide: MPARRYKPTSPGRRNSSVLTRDSVTKEKPEKSLLAKLHKTGGRNVHGRITTRHKGGGHKRRYRIIDFKRNKDGVPATVAAIEYDPNRSANIALLHYHDGEKRYILAPRNLTVGSVVMSGPEAEVDVGNALPLANIPVGTTVHAVELEPGRGAQLARSAGTSAQIIAREGNLVTLRLPSGERRRVRAECRATVGVVGNQSHQNVRWGKAGRKRHLGIRPTVRGTVMNPVDHPHGGGEGKSTPGRAPVTPWGKITQGKPTRKKRKRSDAMIVARRKKGRRR.

Disordered regions lie at residues 1–28 (MPAR…TKEK) and 221–279 (RGTV…GRRR). Residues 12–22 (GRRNSSVLTRD) are compositionally biased toward polar residues.

Belongs to the universal ribosomal protein uL2 family. Part of the 50S ribosomal subunit. Forms a bridge to the 30S subunit in the 70S ribosome.

In terms of biological role, one of the primary rRNA binding proteins. Required for association of the 30S and 50S subunits to form the 70S ribosome, for tRNA binding and peptide bond formation. It has been suggested to have peptidyltransferase activity; this is somewhat controversial. Makes several contacts with the 16S rRNA in the 70S ribosome. This Rubrobacter xylanophilus (strain DSM 9941 / JCM 11954 / NBRC 16129 / PRD-1) protein is Large ribosomal subunit protein uL2.